Reading from the N-terminus, the 62-residue chain is uncharacterized protein (62 aa).

The protein localises to the mitochondrion. This is an uncharacterized protein from Marchantia polymorpha (Common liverwort).